We begin with the raw amino-acid sequence, 1426 residues long: ABC transporter G family member 31 (1426 aa).

N-linked (GlcNAc...) asparagine glycans are attached at residues N6 and N150. The region spanning 160–434 (LSSLRIIKPR…FESLGFRLPP (275 aa)) is the ABC transporter 1 domain. 193–200 (GPPGSGKS) contributes to the ATP binding site. N-linked (GlcNAc...) asparagine glycosylation occurs at N219. Phosphothreonine is present on T276. The ABC transmembrane type-2 1 domain maps to 512 to 725 (ENLKVCFVRE…GQRAIAVNEF (214 aa)). 6 helical membrane passes run 530–550 (FLYT…ATVF), 569–589 (CLFF…PLMI), 618–638 (VPYS…TVGL), 649–669 (MLLL…MASL), 675–695 (IANT…GFVI), and 760–780 (IGIA…TLAL). One can recognise an ABC transporter 2 domain in the interval 826-1078 (MTFHNVNYYV…VLVDYFQGIN (253 aa)). N856 carries an N-linked (GlcNAc...) asparagine glycan. 871–878 (GSSGAGKT) is a binding site for ATP. Positions 1151 to 1365 (SQFLLCLWKQ…TLQGVILSQL (215 aa)) constitute an ABC transmembrane type-2 2 domain. 7 consecutive transmembrane segments (helical) span residues 1172–1192 (LVRL…FWDI), 1202–1222 (LITV…SNAS), 1258–1278 (IPYI…TIGF), 1285–1305 (FVLY…YGMM), 1315–1335 (LAAV…GFLV), 1342–1362 (VWWI…GVIL), and 1396–1416 (IGVS…AFAL).

Belongs to the ABC transporter superfamily. ABCG family. PDR (TC 3.A.1.205) subfamily. As to expression, expressed in seedlings, stems, leaves, siliques and inflorescence. In seeds, confined to the endosperm. Highly expressed in the tapetum of anthers.

It localises to the cell membrane. The catalysed reaction is abscisate(in) + ATP + H2O = abscisate(out) + ADP + phosphate + H(+). Functionally, together with ABCG25, export abscisic acid (ABA) from the endosperm to deliver it to the embryo via ABCG30 and ABCG40-mediated import to suppress radicle extension and subsequent embryonic growth. Together with ABCG9, involved in pollen coat deposition of steryl glycosides required for pollen fitness. May be a general defense protein. This Arabidopsis thaliana (Mouse-ear cress) protein is ABC transporter G family member 31.